The chain runs to 285 residues: tRNA uridine(34) hydroxylase (285 aa).

The 96-residue stretch at 130 to 225 folds into the Rhodanese domain; sequence RGDDVVFFDG…YGEAFGDTGL (96 aa). Cys-185 serves as the catalytic Cysteine persulfide intermediate.

The protein belongs to the TrhO family.

It carries out the reaction uridine(34) in tRNA + AH2 + O2 = 5-hydroxyuridine(34) in tRNA + A + H2O. Functionally, catalyzes oxygen-dependent 5-hydroxyuridine (ho5U) modification at position 34 in tRNAs. The protein is tRNA uridine(34) hydroxylase of Rhodococcus opacus (strain B4).